We begin with the raw amino-acid sequence, 379 residues long: Alcohol dehydrogenase class-2 isozyme 2 (379 aa).

The Zn(2+) site is built by cysteine 47, histidine 69, cysteine 99, cysteine 102, cysteine 105, cysteine 113, and cysteine 176. Residues 205–210 (GLGGVG), aspartate 229, lysine 234, 298–300 (VGV), and arginine 374 each bind NAD(+).

This sequence belongs to the zinc-containing alcohol dehydrogenase family. Class-II subfamily. Homodimer. Requires Zn(2+) as cofactor.

Its subcellular location is the cytoplasm. It carries out the reaction a primary alcohol + NAD(+) = an aldehyde + NADH + H(+). It catalyses the reaction a secondary alcohol + NAD(+) = a ketone + NADH + H(+). This chain is Alcohol dehydrogenase class-2 isozyme 2 (ADH2-2), found in Oryctolagus cuniculus (Rabbit).